Reading from the N-terminus, the 329-residue chain is Malate dehydrogenase (329 aa).

An NAD(+)-binding site is contributed by 12–18 (GAAGQIG). The substrate site is built by R93 and R99. NAD(+)-binding positions include N106, Q113, and 130–132 (TGN). Residues N132 and R163 each contribute to the substrate site. The active-site Proton acceptor is H188.

The protein belongs to the LDH/MDH superfamily. MDH type 2 family.

It catalyses the reaction (S)-malate + NAD(+) = oxaloacetate + NADH + H(+). Catalyzes the reversible oxidation of malate to oxaloacetate. The polypeptide is Malate dehydrogenase (Mycolicibacterium paratuberculosis (strain ATCC BAA-968 / K-10) (Mycobacterium paratuberculosis)).